Here is a 267-residue protein sequence, read N- to C-terminus: Interleukin-15 receptor subunit alpha (267 aa).

An N-terminal signal peptide occupies residues 1 to 30 (MAPRRARGCRTLGLPALLLLLLLRPPATRG). Residues 31–95 (ITCPPPMSVE…WTTPSLKCIR (65 aa)) form the Sushi domain. The Extracellular segment spans residues 31-205 (ITCPPPMSVE…VYPQGHSDTT (175 aa)). Cystine bridges form between cysteine 33-cysteine 75 and cysteine 59-cysteine 93. The interval 102–178 (QRPAPPSTVT…ESSHGTPSQT (77 aa)) is disordered. Residues 108–124 (STVTTAGVTPQPESLSP) are compositionally biased toward polar residues. The segment covering 129 to 145 (PAASSPSSNNTAATTAA) has biased composition (low complexity). An N-linked (GlcNAc...) asparagine glycan is attached at asparagine 137. Residues 152 to 165 (LMPSKSPSTGTTEI) are compositionally biased toward polar residues. The helical transmembrane segment at 206–228 (VAISTSTVLLCGLSAVSLLACYL) threads the bilayer. Residues 229–267 (KSRQTPPLASVEMEAMEALPVTWGTSSRDEDLENCSHHL) lie on the Cytoplasmic side of the membrane.

The interleukin-15 receptor IL15R is a heterotrimer of IL15RA, IL2RB and IL2RG. IL15RA also self-associates. Interacts with SYK. Post-translationally, N-glycosylated and O-glycosylated. In terms of processing, a soluble form (sIL-15RA) arises from proteolytic shedding of the membrane-anchored receptor. It also binds IL-15 and thus interferes with IL-15 binding to the membrane receptor. As to expression, expressed in neutrophils (at protein level). Expressed in fetal brain with higher expression in the hippocampus and cerebellum than in cortex and thalamus. Higher levels of soluble sIL-15RA form in comparison with membrane-bound forms is present in all brain structures. Isoforms 1, 3, 4, 5, 6, 7, 8 and 9: Widely expressed.

The protein localises to the membrane. The protein resides in the nucleus membrane. It is found in the cell surface. It localises to the endoplasmic reticulum membrane. Its subcellular location is the golgi apparatus membrane. The protein localises to the cytoplasmic vesicle membrane. The protein resides in the secreted. It is found in the extracellular space. In terms of biological role, high-affinity receptor for interleukin-15. Can signal both in cis and trans where IL15R from one subset of cells presents IL15 to neighboring IL2RG-expressing cells. In neutrophils, binds and activates kinase SYK in response to IL15 stimulation. In neutrophils, required for IL15-induced phagocytosis in a SYK-dependent manner. Expression of different isoforms may alter or interfere with signal transduction. Functionally, does not bind IL15. The sequence is that of Interleukin-15 receptor subunit alpha (IL15RA) from Homo sapiens (Human).